The chain runs to 506 residues: Histidine ammonia-lyase (506 aa).

A cross-link (5-imidazolinone (Ala-Gly)) is located at residues 143–145 (ASG). A 2,3-didehydroalanine (Ser) modification is found at Ser144.

This sequence belongs to the PAL/histidase family. In terms of processing, contains an active site 4-methylidene-imidazol-5-one (MIO), which is formed autocatalytically by cyclization and dehydration of residues Ala-Ser-Gly.

The protein resides in the cytoplasm. The enzyme catalyses L-histidine = trans-urocanate + NH4(+). Its pathway is amino-acid degradation; L-histidine degradation into L-glutamate; N-formimidoyl-L-glutamate from L-histidine: step 1/3. This chain is Histidine ammonia-lyase, found in Enterobacter sp. (strain 638).